The sequence spans 541 residues: MAIMPYIRQGTVIDTLVILFSTWAFLGLIRVIRRRSNTTSLKGPPSESFIFGLHQIIHKSEDSDALYEQWAAEYGSVYQLSGPMGTKRVVLCDPKAILHLYSKDTFGFVQIGIIRAFHEKYFGRGIIWAEGESHRRQRKALTPAFSNVAIRNITPVFFDSAYKTKAAWDTIFESNPTKDGIIIEVQTWMNHISLDSIGIAGFSHDFGSIQGKPSAVLDVFDSFSSVQPDAMSTLMFTLAATFPIMLKLPNNRHALFAKLHQTILEISDELLESTRKEEEGKAGGGRGDAKSIIGSLIKAESANSHLRISQEEVIAQMNVLLLAGYETTSVSLTWALIELSRHPDVQQKLRDELSRFAATDPTWEELTNGLPYLDAVVHEILRLHAPLNETTRVVADDDVIPLGTPLQTASGNIVDRISVGKGTTVSIPTRCMNRLTGLWGDNAKEFVPDRWLNDAKDQLKSNEIQGYRHLLTFIDGPRTCLGKGFAVAEFKAVLSVLIRHYTFEFPDGPETKVVGYMSIVERPRVEGQDGAKVPLLVRRVE.

Residues 12 to 32 (VIDTLVILFSTWAFLGLIRVI) traverse the membrane as a helical segment. Cys-480 is a heme binding site.

It belongs to the cytochrome P450 family. Requires heme as cofactor.

Its subcellular location is the membrane. The protein operates within secondary metabolite biosynthesis; terpenoid biosynthesis. In terms of biological role, cytochrome P450 monooxygenase; part of the gene cluster that mediates the biosynthesis of clavilactone A, a meroterpenoid that features a unique benzo-fused ten-membered carbocyclic ring unit with an alpha,beta-epoxy-gamma-lactone moiety, forming an intriguing 10/5/3 tricyclic nested skeleton. Cytochrome P450 monooxygenases claO, claP, claQ, claU, and claW are close orthologs, suggesting that a redundant function or pseudogenes are present in the cla cluster. These monoxygenases are not involved in clavilactone A biosynthesis nor its modification. ClaR, ClaS and ClaT are sufficient to produce clavilactone A. The biosynthesis begins with the prenyltransferase claS that transfers geranyl pyrophosphate (GPP) to hydroquinone to produces geranylhydroquinone. The cytochrome P450 monooxygenase claR then catalyzes the diradical coupling reaction between the intramolecular hydroquinone and allyl moieties to form the benzo-fused ten-membered carbocyclic ring unit of wigantol. Finally the cytochrome P450 monooxygenase claT exquisitely and stereoselectively assembles the alpha,beta-epoxy-gamma-lactone moiety, producing clavilactone A via arnebinol A. In Ampulloclitocybe clavipes (Club foot), this protein is Cytochrome P450 monooxygenase claU.